Here is a 430-residue protein sequence, read N- to C-terminus: Gamma-glutamyl phosphate reductase (430 aa).

This sequence belongs to the gamma-glutamyl phosphate reductase family.

It is found in the cytoplasm. It catalyses the reaction L-glutamate 5-semialdehyde + phosphate + NADP(+) = L-glutamyl 5-phosphate + NADPH + H(+). The protein operates within amino-acid biosynthesis; L-proline biosynthesis; L-glutamate 5-semialdehyde from L-glutamate: step 2/2. Its function is as follows. Catalyzes the NADPH-dependent reduction of L-glutamate 5-phosphate into L-glutamate 5-semialdehyde and phosphate. The product spontaneously undergoes cyclization to form 1-pyrroline-5-carboxylate. This Psychrobacter arcticus (strain DSM 17307 / VKM B-2377 / 273-4) protein is Gamma-glutamyl phosphate reductase.